Here is a 295-residue protein sequence, read N- to C-terminus: Beta-chimaerin (295 aa).

The segment at 41–91 (THNFKVHTFRGPHWCEYCANFMWGLIAQGVRCSDCGLNVHKQCSKHVPNDC) adopts a Phorbol-ester/DAG-type zinc-finger fold. In terms of domain architecture, Rho-GAP spans 104 to 295 (CDLTTLVKAH…ILIENEDVLF (192 aa)).

As to expression, found in cerebellum and testis.

It localises to the membrane. With respect to regulation, in the inactive state, the N terminus protrudes into the active site of the Rho-GAP domain, sterically blocking Rac binding. Phospholipid binding to the Phorbol-ester/DAG-type zinc-finger/C1 domain triggers the cooperative dissociation of these interactions, allowing the N-terminus to move out of the active site and thereby activating the enzyme. GTPase-activating protein for p21-rac. This is Beta-chimaerin (Chn2) from Rattus norvegicus (Rat).